The sequence spans 180 residues: Putative peroxiredoxin YkuU (180 aa).

In terms of domain architecture, Thioredoxin spans 4–165; sequence RMVGKQAPRF…TLRVLQALQT (162 aa). The Cysteine sulfenic acid (-SOH) intermediate role is filled by cysteine 52.

This sequence belongs to the peroxiredoxin family. AhpC/Prx1 subfamily. As to quaternary structure, homodimer; disulfide-linked, upon oxidation.

It is found in the cytoplasm. It catalyses the reaction a hydroperoxide + [protein]-dithiol = [protein]-disulfide + an alcohol + H2O. In terms of biological role, thiol-specific peroxidase that catalyzes the reduction of hydrogen peroxide and organic hydroperoxides to water and alcohols, respectively. Plays a role in cell protection against oxidative stress by detoxifying peroxides. The polypeptide is Putative peroxiredoxin YkuU (ykuU) (Bacillus subtilis (strain 168)).